Reading from the N-terminus, the 355-residue chain is Mitochondrial import inner membrane translocase subunit TIM50 (355 aa).

Residues 1–44 constitute a mitochondrion transit peptide; the sequence is MAASAAVFLRLRSGLRQGARGLCARLATPPPRAPDQAAEIGSRA. Positions 25 to 61 are disordered; that stretch reads RLATPPPRAPDQAAEIGSRAGTKAQTQGPQQQRSSEG. Residues 45–67 are Mitochondrial matrix-facing; that stretch reads GTKAQTQGPQQQRSSEGPSYAKK. Polar residues predominate over residues 47–61; the sequence is KAQTQGPQQQRSSEG. Residues 68–88 traverse the membrane as a helical segment; sequence VALWLARLLGAGGTVSVIYIF. The Mitochondrial intermembrane portion of the chain corresponds to 89-355; the sequence is GNNAVDENGA…SRLWPRSKQP (267 aa). Residues 145–288 form the FCP1 homology domain; the sequence is YYQPPYTLVL…LDLSAFLKTI (144 aa). Ser343 carries the post-translational modification Phosphoserine.

Belongs to the TIM50 family. In terms of assembly, component of the TIM23 complex at least composed of TIMM23, TIMM17 (TIMM17A or TIMM17B) and TIMM50; within this complex, directly interacts with TIMM23. The complex interacts with the TIMM44 component of the PAM complex and with DNAJC15.

Its subcellular location is the mitochondrion inner membrane. Functionally, essential component of the TIM23 complex, a complex that mediates the translocation of transit peptide-containing proteins across the mitochondrial inner membrane. Has some phosphatase activity in vitro; however such activity may not be relevant in vivo. This is Mitochondrial import inner membrane translocase subunit TIM50 (TIMM50) from Bos taurus (Bovine).